The sequence spans 360 residues: Cyclin-D1-binding protein 1 (360 aa).

The residue at position 2 (alanine 2) is an N-acetylalanine. Interaction with TCF3 regions lie at residues 2–184 and 150–360; these read ASAT…VDFV and ISYN…ELEL. 2 interaction with RPLP0 regions span residues 2–190 and 240–360; these read ASAT…AHEE and LIIP…ELEL. A required for interaction with CCND1 region spans residues 2–208; sequence ASATAPAAAV…DPYSGLLNDT (207 aa).

It belongs to the CCNDBP1 family. Interacts with CCND1 and GRAP2. May also interact with COPS5, RPLP0, SIRT6, SYF2 and TCF3. Post-translationally, phosphorylated. In terms of tissue distribution, ubiquitously expressed. Expression is down-regulated in a variety of tumor types including breast, colon, prostate and rectal tumors, and is up-regulated in certain hepatic carcinomas.

It localises to the cytoplasm. Its subcellular location is the nucleus. In terms of biological role, may negatively regulate cell cycle progression. May act at least in part via inhibition of the cyclin-D1/CDK4 complex, thereby preventing phosphorylation of RB1 and blocking E2F-dependent transcription. In Homo sapiens (Human), this protein is Cyclin-D1-binding protein 1 (CCNDBP1).